Consider the following 327-residue polypeptide: G protein pathway suppressor 2 (327 aa).

Positions 14–109 (MARALHRHIM…RRRKEQSDLT (96 aa)) form a coiled coil. The interval 26–65 (RERKRQEEEEVDKMMEQKMKEEQERRKKKEMEERMSLEET) is disordered. Residues Lys-45 and Lys-71 each participate in a glycyl lysine isopeptide (Lys-Gly) (interchain with G-Cter in SUMO1) cross-link. The interval 61-94 (SLEETKEQILKLQEKLSALQEEKHQLFLQLKKVL) is interaction with SUMO. 3 disordered regions span residues 178–208 (GQFQGSPGGAYGTAQPPPHYGPTQPAYSPSQ), 253–285 (QKQMEHANQQTSFSDSSSLRPMHPQALHPAPGL), and 300–327 (KSGFATTSQPGPRLPFIQHSQNPRFYHK). Residues 253–271 (QKQMEHANQQTSFSDSSSL) are compositionally biased toward polar residues. Arg-312 is modified (asymmetric dimethylarginine). A compositionally biased stretch (polar residues) spans 317-327 (QHSQNPRFYHK). The residue at position 323 (Arg-323) is an Asymmetric dimethylarginine; alternate. Residue Arg-323 is modified to Omega-N-methylarginine; alternate.

In terms of assembly, component of the N-Cor repressor complex, at least composed of NCOR1, NCOR2, HDAC3, TBL1X, TBL1R, CORO2A and GPS2. Interacts (when sumoylated at Lys-71) with TBL1X; leading to protect GPS2 from degradation by the proteasome. Interacts with UBE2N; leading to inhibit UBE2N/Ubc13 activity. Interacts with TRAF1. Interacts with TRAF2. Interacts with TRAF6. Interacts with PPARG (when in the liganded conformation). Interacts with (sumoylated) NR1H2; interaction with sumoylated NR1H2 and NR5A2 onto hepatic acute phase protein promoters prevents N-Cor corepressor complex dissociation. Interacts with (sumoylated) NR5A2; interaction with sumoylated NR1H2 and NR5A2 onto hepatic acute phase protein promoters prevents N-Cor corepressor complex dissociation. Interacts with NR1H3. Interacts with RFX4. Interacts with ANKRD26. Sumoylation regulates its subcellular location. Sumoylation at Lys-45 and Lys-71 regulates the shuttling between the cytoplasm and the nucleus. Sumoylation at Lys-71 is required for interaction with TBL1X. Sumoylated at Lys-45 and Lys-71 in mitochondrion. Desumoylation by SENP1 leads to relocation from the mitochondria to the nucleus. In terms of processing, ubiquitinated at the C-terminus by SIAH2; leading to its degradation by the proteasome. Interaction with TBL1X and methylation at Arg-323 protect GPS2 against ubiquitination and degradation. Post-translationally, methylated at Arg-312 and Arg-323 by PRMT6. Methylation at Arg-323 protects from degradation by the proteasome.

It localises to the nucleus. Its subcellular location is the mitochondrion. The protein localises to the cytoplasm. It is found in the cytosol. Functionally, key regulator of inflammation, lipid metabolism and mitochondrion homeostasis that acts by inhibiting the activity of the ubiquitin-conjugating enzyme UBE2N/Ubc13, thereby inhibiting 'Lys-63'-linked ubiquitination. In the nucleus, can both acts as a corepressor and coactivator of transcription, depending on the context. Acts as a transcription coactivator in adipocytes by promoting the recruitment of PPARG to promoters: acts by inhibiting the activity of the ubiquitin-conjugating enzyme UBE2N/Ubc13, leading to stabilization of KDM4A and subsequent histone H3 'Lys-9' (H3K9) demethylation. Promotes cholesterol efflux by acting as a transcription coactivator. Acts as a regulator of B-cell development by inhibiting UBE2N/Ubc13, thereby restricting the activation of Toll-like receptors (TLRs) and B-cell antigen receptors (BCRs) signaling pathways. Acts as a key mediator of mitochondrial stress response: in response to mitochondrial depolarization, relocates from the mitochondria to the nucleus following desumoylation and specifically promotes expression of nuclear-encoded mitochondrial genes. Promotes transcription of nuclear-encoded mitochondrial genes by inhibiting UBE2N/Ubc13. Can also act as a corepressor as part of the N-Cor repressor complex by repressing active PPARG. Plays an anti-inflammatory role in macrophages and is required for insulin sensitivity by acting as a corepressor. Plays an anti-inflammatory role during the hepatic acute phase response by interacting with sumoylated NR1H2 and NR5A2 proteins, thereby preventing N-Cor corepressor complex dissociation. In the cytosol, also plays a non-transcriptional role by regulating insulin signaling and pro-inflammatory pathways. In the cytoplasm, acts as a negative regulator of inflammation by inhibiting the pro-inflammatory TNF-alpha pathway; acts by repressing UBE2N/Ubc13 activity. In the cytoplasm of adipocytes, restricts the activation of insulin signaling via inhibition of UBE2N/Ubc13-mediated ubiquitination of AKT. Able to suppress G-protein- and mitogen-activated protein kinase-mediated signal transduction. This is G protein pathway suppressor 2 from Mus musculus (Mouse).